Here is a 541-residue protein sequence, read N- to C-terminus: Glucose-6-phosphate isomerase (541 aa).

The Proton donor role is filled by glutamate 346. Catalysis depends on residues histidine 377 and lysine 506.

This sequence belongs to the GPI family.

The protein localises to the cytoplasm. It catalyses the reaction alpha-D-glucose 6-phosphate = beta-D-fructose 6-phosphate. The protein operates within carbohydrate biosynthesis; gluconeogenesis. It functions in the pathway carbohydrate degradation; glycolysis; D-glyceraldehyde 3-phosphate and glycerone phosphate from D-glucose: step 2/4. Functionally, catalyzes the reversible isomerization of glucose-6-phosphate to fructose-6-phosphate. In Agrobacterium fabrum (strain C58 / ATCC 33970) (Agrobacterium tumefaciens (strain C58)), this protein is Glucose-6-phosphate isomerase.